The sequence spans 166 residues: NADPH-dependent 7-cyano-7-deazaguanine reductase (166 aa).

Cys57 functions as the Thioimide intermediate in the catalytic mechanism. Residue Asp64 is the Proton donor of the active site. Substrate contacts are provided by residues 79–81 (VES) and 98–99 (HE).

Belongs to the GTP cyclohydrolase I family. QueF type 1 subfamily.

Its subcellular location is the cytoplasm. It catalyses the reaction 7-aminomethyl-7-carbaguanine + 2 NADP(+) = 7-cyano-7-deazaguanine + 2 NADPH + 3 H(+). It functions in the pathway tRNA modification; tRNA-queuosine biosynthesis. Functionally, catalyzes the NADPH-dependent reduction of 7-cyano-7-deazaguanine (preQ0) to 7-aminomethyl-7-deazaguanine (preQ1). This Alkaliphilus metalliredigens (strain QYMF) protein is NADPH-dependent 7-cyano-7-deazaguanine reductase.